Reading from the N-terminus, the 338-residue chain is tRNA N6-adenosine threonylcarbamoyltransferase (338 aa).

Positions 110 and 114 each coordinate Fe cation. Residues 132–136 (ILSGG), D165, G178, and N274 each bind substrate. D298 is a Fe cation binding site.

The protein belongs to the KAE1 / TsaD family. The cofactor is Fe(2+).

Its subcellular location is the cytoplasm. It catalyses the reaction L-threonylcarbamoyladenylate + adenosine(37) in tRNA = N(6)-L-threonylcarbamoyladenosine(37) in tRNA + AMP + H(+). Functionally, required for the formation of a threonylcarbamoyl group on adenosine at position 37 (t(6)A37) in tRNAs that read codons beginning with adenine. Is involved in the transfer of the threonylcarbamoyl moiety of threonylcarbamoyl-AMP (TC-AMP) to the N6 group of A37, together with TsaE and TsaB. TsaD likely plays a direct catalytic role in this reaction. This is tRNA N6-adenosine threonylcarbamoyltransferase from Borrelia hermsii (strain HS1 / DAH).